The following is a 274-amino-acid chain: MLTLYHQERSPDATSNDRDETPETVVREVHALTPAPEDNSRTMTATLPPPPAFRGYFSPPRSATTMSEGENFTTISREFNALVIAGSSMENNELMTRDVTQREDERQDELMRIHEDTDHEEETNPLAIVPDQYPGSGLDPGSDNGPGQSRVGSTVQRVKREEVEAKITAWQTAKLAKINNRFKREDAVINGWFNEQVNKANSWMKKIERKLEERKAKAMEKTQNNVAKAQRKAEERRATAEAKRGTEVAKVVEVANLMRALGRPPAKRSFFSFS.

Over residues 1–30 the composition is skewed to basic and acidic residues; the sequence is MLTLYHQERSPDATSNDRDETPETVVREVH. Disordered stretches follow at residues 1-71, 117-157, and 218-245; these read MLTL…EGEN, TDHE…TVQR, and AMEK…AKRG. Composition is skewed to polar residues over residues 61-71 and 145-156; these read RSATTMSEGEN and GPGQSRVGSTVQ. Positions 204–239 form a coiled coil; sequence MKKIERKLEERKAKAMEKTQNNVAKAQRKAEERRAT. The span at 231–245 shows a compositional bias: basic and acidic residues; it reads RKAEERRATAEAKRG.

It belongs to the remorin family. In terms of assembly, forms homodimer and heterodimer with REM4.1. Interacts with KIN11. Post-translationally, probably ubiquitinated and degraded by the 26S proteasome pathway. As to expression, predominantly detected in bud, stem, root, flower, silique, and leaves, and enhanced dramatically in senescence leaf.

Its subcellular location is the cell membrane. Functionally, collaborates with REM4.1 to positively regulate the BCTV and BSCTV susceptibility. This is Remorin 4.2 from Arabidopsis thaliana (Mouse-ear cress).